Reading from the N-terminus, the 135-residue chain is UPF0201 protein TON_1346 (135 aa).

Belongs to the UPF0201 family.

This Thermococcus onnurineus (strain NA1) protein is UPF0201 protein TON_1346.